The following is a 150-amino-acid chain: MGIQHEFDIIINGDIALRNLQLHRGDNYGCKLKIISNDYKKLKFRFIIRPDWSEIDEVKGLTVFANNYAVKVNKVDDTFYYVIYEAVIHLYNKKTEILIYSDDENELFKHYYPYISLNMISKKYKVKEENYSSPYIEHPLIPYRDYESMD.

It belongs to the orthopoxvirus OPG027 family.

Its function is as follows. Inhibits antiviral activity induced by type I interferons. Does not block signal transduction of IFN, but is important to counteract the host antiviral state induced by a pre-treatment with IFN. This is Interferon antagonist OPG027 (OPG027) from Homo sapiens (Human).